Here is a 275-residue protein sequence, read N- to C-terminus: LexA repressor (275 aa).

A disordered region spans residues 1–50; it reads MKRSTPRPARSQAALTTSSEESPDRVERGGDGVATVTDFPDGPPDETGLT. The H-T-H motif DNA-binding region spans 73–93; that stretch reads MREIGEAVGLTSTSSVAHQLM. The segment at 114–151 is disordered; it reads RSAESAVPDASAGHSPAADRAPSARRPPRGPSPIDSNP. Catalysis depends on for autocatalytic cleavage activity residues serine 199 and lysine 236.

The protein belongs to the peptidase S24 family. As to quaternary structure, homodimer.

The enzyme catalyses Hydrolysis of Ala-|-Gly bond in repressor LexA.. In terms of biological role, represses a number of genes involved in the response to DNA damage (SOS response), including recA and lexA. In the presence of single-stranded DNA, RecA interacts with LexA causing an autocatalytic cleavage which disrupts the DNA-binding part of LexA, leading to derepression of the SOS regulon and eventually DNA repair. This Acidothermus cellulolyticus (strain ATCC 43068 / DSM 8971 / 11B) protein is LexA repressor.